The primary structure comprises 134 residues: Gastrin-releasing peptide (134 aa).

The first 23 residues, 1 to 23 (MRGREVPLVLLALVLCLAPRGWA), serve as a signal peptide directing secretion. The residue at position 50 (Met50) is a Methionine amide. Residues 54–134 (SVAESPQLHE…QHEGRNPQLN (81 aa)) constitute a propeptide that is removed on maturation. The interval 95 to 134 (GHQMPPWEPLSIHQPAWDSEDVSNFKDTGPQHEGRNPQLN) is disordered. The span at 123–134 (GPQHEGRNPQLN) shows a compositional bias: basic and acidic residues.

Belongs to the bombesin/neuromedin-B/ranatensin family. As to expression, detected in adrenal medulla (at protein level).

It localises to the cytoplasmic vesicle. It is found in the secretory vesicle lumen. The protein localises to the secreted. Its subcellular location is the cell projection. The protein resides in the neuron projection. Stimulates the release of gastrin and other gastrointestinal hormones. Contributes to the perception of prurient stimuli and to the transmission of itch signals in the spinal cord that promote scratching behavior. Contributes primarily to nonhistaminergic itch sensation. In one study, shown to act in the amygdala as part of an inhibitory network which inhibits memory specifically related to learned fear. In another study, shown to act on vasoactive intestinal peptide (VIP)-expressing cells in the auditory cortex, most likely via extrasynaptic diffusion from local and long-range sources, to mediate disinhibition of glutamatergic cells via VIP cell-specific GRPR signaling which leads to enhanced auditory fear memories. Contributes to the regulation of food intake. Inhibits voltage-gated sodium channels but enhances voltage-gated potassium channels in hippocampal neurons. Induces sighing by acting directly on the pre-Botzinger complex, a cluster of several thousand neurons in the ventrolateral medulla responsible for inspiration during respiratory activity. Its function is as follows. Induces an itch response through activation of receptors present on mast cells, triggering mast cell degranulation. In Bos taurus (Bovine), this protein is Gastrin-releasing peptide (GRP).